The chain runs to 90 residues: Putative cytochrome c oxidase subunit 5b-like (90 aa).

Residues Cys-43, Cys-67, and Cys-70 each contribute to the Zn(2+) site.

The protein belongs to the cytochrome c oxidase subunit 5B (TC 3.D.4.11) family.

This is Putative cytochrome c oxidase subunit 5b-like from Arabidopsis thaliana (Mouse-ear cress).